The primary structure comprises 226 residues: Ribosomal RNA small subunit methyltransferase G (226 aa).

Residues glycine 95, leucine 100, 146–147 (VE), and arginine 159 contribute to the S-adenosyl-L-methionine site.

It belongs to the methyltransferase superfamily. RNA methyltransferase RsmG family.

It is found in the cytoplasm. It catalyses the reaction guanosine(527) in 16S rRNA + S-adenosyl-L-methionine = N(7)-methylguanosine(527) in 16S rRNA + S-adenosyl-L-homocysteine. Its function is as follows. Specifically methylates the N7 position of guanine in position 527 of 16S rRNA. The sequence is that of Ribosomal RNA small subunit methyltransferase G from Acidovorax ebreus (strain TPSY) (Diaphorobacter sp. (strain TPSY)).